The chain runs to 213 residues: Ribosomal RNA small subunit methyltransferase G (213 aa).

S-adenosyl-L-methionine-binding positions include G77, M82, 104–106, and R145; that span reads EKS.

This sequence belongs to the methyltransferase superfamily. RNA methyltransferase RsmG family.

It is found in the cytoplasm. It carries out the reaction guanosine(527) in 16S rRNA + S-adenosyl-L-methionine = N(7)-methylguanosine(527) in 16S rRNA + S-adenosyl-L-homocysteine. In terms of biological role, specifically methylates the N7 position of guanine in position 527 of 16S rRNA. The protein is Ribosomal RNA small subunit methyltransferase G of Pelagibacter ubique (strain HTCC1062).